A 601-amino-acid chain; its full sequence is Group B oligopeptidase PepB (601 aa).

Position 386 (histidine 386) interacts with Zn(2+). Glutamate 387 is a catalytic residue. Zn(2+)-binding residues include histidine 390 and histidine 393.

It belongs to the peptidase M3B family. It depends on Zn(2+) as a cofactor.

It is found in the cytoplasm. Has oligopeptidase activity and degrades a variety of small bioactive peptides, including bradykinin, neurotensin, and peptide fragments of substance P and adrenocorticotropin. Also hydrolyzes the synthetic collagen-like substrate N-(3-[2-furyl]acryloyl)-Leu-Gly-Pro-Ala (FALGPA). The sequence is that of Group B oligopeptidase PepB (pepB) from Streptococcus agalactiae serotype III (strain NEM316).